The following is a 126-amino-acid chain: Small ribosomal subunit protein uS13 (126 aa).

The disordered stretch occupies residues 92-126 (HRRGLPVRGQRTKTNARTRKGPRKTVAGKKKATRK).

The protein belongs to the universal ribosomal protein uS13 family. Part of the 30S ribosomal subunit. Forms a loose heterodimer with protein S19. Forms two bridges to the 50S subunit in the 70S ribosome.

Its function is as follows. Located at the top of the head of the 30S subunit, it contacts several helices of the 16S rRNA. In the 70S ribosome it contacts the 23S rRNA (bridge B1a) and protein L5 of the 50S subunit (bridge B1b), connecting the 2 subunits; these bridges are implicated in subunit movement. Contacts the tRNAs in the A and P-sites. In Deinococcus geothermalis (strain DSM 11300 / CIP 105573 / AG-3a), this protein is Small ribosomal subunit protein uS13.